The primary structure comprises 305 residues: Probable lipid kinase YegS-like (305 aa).

In terms of domain architecture, DAGKc spans Met1–Leu129. ATP-binding positions include Thr39, Gly65 to Asp71, and Thr92. The Mg(2+) site is built by Leu210, Asp213, and Leu215. Glu268 acts as the Proton acceptor in catalysis.

It belongs to the diacylglycerol/lipid kinase family. YegS lipid kinase subfamily. The cofactor is Mg(2+). Ca(2+) is required as a cofactor.

The protein resides in the cytoplasm. Probably phosphorylates lipids; the in vivo substrate is unknown. This is Probable lipid kinase YegS-like from Pseudomonas syringae pv. tomato (strain ATCC BAA-871 / DC3000).